The primary structure comprises 275 residues: 4-diphosphocytidyl-2-C-methyl-D-erythritol kinase (275 aa).

Residue Lys-14 is part of the active site. 98 to 108 (PMGAGLGGGSS) contributes to the ATP binding site. Asp-140 is a catalytic residue.

Belongs to the GHMP kinase family. IspE subfamily.

It catalyses the reaction 4-CDP-2-C-methyl-D-erythritol + ATP = 4-CDP-2-C-methyl-D-erythritol 2-phosphate + ADP + H(+). The protein operates within isoprenoid biosynthesis; isopentenyl diphosphate biosynthesis via DXP pathway; isopentenyl diphosphate from 1-deoxy-D-xylulose 5-phosphate: step 3/6. Its function is as follows. Catalyzes the phosphorylation of the position 2 hydroxy group of 4-diphosphocytidyl-2C-methyl-D-erythritol. In Francisella philomiragia subsp. philomiragia (strain ATCC 25017 / CCUG 19701 / FSC 153 / O#319-036), this protein is 4-diphosphocytidyl-2-C-methyl-D-erythritol kinase.